The sequence spans 344 residues: Holliday junction branch migration complex subunit RuvB (344 aa).

The interval 1 to 183 (MLDERLISSH…FGISCRLDFY (183 aa)) is large ATPase domain (RuvB-L). ATP contacts are provided by residues Ile22, Arg23, Gly64, Lys67, Thr68, Thr69, 130 to 132 (EDY), Arg173, Tyr183, and Arg220. Mg(2+) is bound at residue Thr68. Residues 184–254 (TPLELSEIIL…LAKWALEMLE (71 aa)) form a small ATPAse domain (RuvB-S) region. The interval 257–344 (ECGLDVMDRM…LEGKGLFSDA (88 aa)) is head domain (RuvB-H). DNA contacts are provided by Lys312 and Arg317.

This sequence belongs to the RuvB family. In terms of assembly, homohexamer. Forms an RuvA(8)-RuvB(12)-Holliday junction (HJ) complex. HJ DNA is sandwiched between 2 RuvA tetramers; dsDNA enters through RuvA and exits via RuvB. An RuvB hexamer assembles on each DNA strand where it exits the tetramer. Each RuvB hexamer is contacted by two RuvA subunits (via domain III) on 2 adjacent RuvB subunits; this complex drives branch migration. In the full resolvosome a probable DNA-RuvA(4)-RuvB(12)-RuvC(2) complex forms which resolves the HJ.

The protein resides in the cytoplasm. The catalysed reaction is ATP + H2O = ADP + phosphate + H(+). Functionally, the RuvA-RuvB-RuvC complex processes Holliday junction (HJ) DNA during genetic recombination and DNA repair, while the RuvA-RuvB complex plays an important role in the rescue of blocked DNA replication forks via replication fork reversal (RFR). RuvA specifically binds to HJ cruciform DNA, conferring on it an open structure. The RuvB hexamer acts as an ATP-dependent pump, pulling dsDNA into and through the RuvAB complex. RuvB forms 2 homohexamers on either side of HJ DNA bound by 1 or 2 RuvA tetramers; 4 subunits per hexamer contact DNA at a time. Coordinated motions by a converter formed by DNA-disengaged RuvB subunits stimulates ATP hydrolysis and nucleotide exchange. Immobilization of the converter enables RuvB to convert the ATP-contained energy into a lever motion, pulling 2 nucleotides of DNA out of the RuvA tetramer per ATP hydrolyzed, thus driving DNA branch migration. The RuvB motors rotate together with the DNA substrate, which together with the progressing nucleotide cycle form the mechanistic basis for DNA recombination by continuous HJ branch migration. Branch migration allows RuvC to scan DNA until it finds its consensus sequence, where it cleaves and resolves cruciform DNA. In Syntrophomonas wolfei subsp. wolfei (strain DSM 2245B / Goettingen), this protein is Holliday junction branch migration complex subunit RuvB.